The sequence spans 254 residues: 5'-nucleotidase SurE (254 aa).

4 residues coordinate a divalent metal cation: Asp8, Asp9, Ser40, and Asn93.

It belongs to the SurE nucleotidase family. The cofactor is a divalent metal cation.

The protein resides in the cytoplasm. It carries out the reaction a ribonucleoside 5'-phosphate + H2O = a ribonucleoside + phosphate. Functionally, nucleotidase that shows phosphatase activity on nucleoside 5'-monophosphates. The protein is 5'-nucleotidase SurE of Rhizorhabdus wittichii (strain DSM 6014 / CCUG 31198 / JCM 15750 / NBRC 105917 / EY 4224 / RW1) (Sphingomonas wittichii).